The sequence spans 254 residues: Urease accessory protein UreF (254 aa).

Positions 1–11 are enriched in basic and acidic residues; sequence MDKGKSVKSTE. The interval 1–25 is disordered; sequence MDKGKSVKSTEKSVGIPPKTPKTDN.

It belongs to the UreF family. In terms of assembly, ureH, UreF and UreG form a complex that acts as a GTP-hydrolysis-dependent molecular chaperone, activating the urease apoprotein by helping to assemble the nickel containing metallocenter of UreC. The UreE protein probably delivers the nickel.

Its subcellular location is the cytoplasm. In terms of biological role, required for maturation of urease via the functional incorporation of the urease nickel metallocenter. The sequence is that of Urease accessory protein UreF from Helicobacter pylori (strain P12).